We begin with the raw amino-acid sequence, 345 residues long: MAQKENAYPWPYGSKTSQSGLNTLSQRVLRKEPATTSALALVNRFNSQSTAAPGQKLAENKSQGSTASQGSQNKQPFTIDNFEIGRPLGKGKFGNVYLAREKKSRFIVALKILFKSQIEKEGVEHQLRREIEIQAHLKHPNILQLYNYFYDQQRIYLILEYAPRGELYKELQKSRTFDEQRTATIMEELSDALTYCHKKKVIHRDIKPENLLLGLQGELKIADFGWSVHAPSLRRKTMCGTLDYLPPEMIEGRMHNEMVDLWCIGVLCYELMVGNPPFESPSHSETYRRIVKVDLKFPSSVPSGAQDLISKLLKHNPWQRLPLAEVAAHPWVRANSRRVLPPSAL.

Positions Met-1 to Ser-25 are disordered. The span at Ser-14 to Ser-25 shows a compositional bias: polar residues. Thr-35 carries the phosphothreonine modification. A disordered region spans residues Thr-50–Phe-77. A compositionally biased stretch (polar residues) spans Asn-60–Phe-77. Ser-62 carries the phosphoserine modification. The 251-residue stretch at Phe-82–Val-332 folds into the Protein kinase domain. ATP contacts are provided by residues Leu-88–Val-96 and Lys-111. The active-site Proton acceptor is the Asp-205. Residue Lys-220 is modified to N6-acetyllysine. Phosphoserine is present on Ser-232. Residue Thr-237 is modified to Phosphothreonine; by autocatalysis.

The protein belongs to the protein kinase superfamily. Ser/Thr protein kinase family. Aurora subfamily. As to quaternary structure, component of the chromosomal passenger complex (CPC) composed of at least BIRC5/survivin, CDCA8/borealin, INCENP, AURKB or AURKC; predominantly independent AURKB- and AURKC-containing complexes exist. Associates with RACGAP1 during M phase. Interacts with SPDYC; this interaction may be required for proper localization of active, Thr-237-phosphorylated AURKB form during prometaphase and metaphase. Interacts with p53/TP53. Interacts (via the middle kinase domain) with NOC2L (via the N- and C-terminus domains). Interacts with CDCA1. Interacts with EVI5. Interacts with JTB. Interacts with NDC80. Interacts with PSMA3. Interacts with RNF2/RING1B. Interacts with SEPTIN1. Interacts with SIRT2. Interacts with TACC1. Interacts with TTC28. The phosphorylation of Thr-237 requires the binding to INCENP and occurs by means of an autophosphorylation mechanism. Thr-237 phosphorylation is indispensable for the AURKB kinase activity. Post-translationally, acetylated at Lys-220 by KAT5 at kinetochores, increasing AURKB activity and promoting accurate chromosome segregation in mitosis. In terms of processing, ubiquitinated by different BCR (BTB-CUL3-RBX1) E3 ubiquitin ligase complexes. Ubiquitinated by the BCR(KLHL9-KLHL13) E3 ubiquitin ligase complex, ubiquitination leads to removal from mitotic chromosomes and is required for cytokinesis. During anaphase, the BCR(KLHL21) E3 ubiquitin ligase complex recruits the CPC complex from chromosomes to the spindle midzone and mediates the ubiquitination of AURKB. Ubiquitination of AURKB by BCR(KLHL21) E3 ubiquitin ligase complex may not lead to its degradation by the proteasome. Deubiquitinated by USP35; inhibiting CDH1-mediated degradation of AURKB. In terms of tissue distribution, expressed in testis, intestine and spleen. All of them are tissues that contain a large number of proliferating cells. Expressed during S phase, in a cell-cycle-dependent fashion.

It is found in the nucleus. The protein resides in the chromosome. Its subcellular location is the centromere. The protein localises to the kinetochore. It localises to the cytoplasm. It is found in the cytoskeleton. The protein resides in the spindle. Its subcellular location is the midbody. The enzyme catalyses L-seryl-[protein] + ATP = O-phospho-L-seryl-[protein] + ADP + H(+). The catalysed reaction is L-threonyl-[protein] + ATP = O-phospho-L-threonyl-[protein] + ADP + H(+). With respect to regulation, activity is greatly increased when AURKB is within the CPC complex. In particular, AURKB-phosphorylated INCENP acts as an activator of AURKB. Positive feedback between HASPIN and AURKB contributes to CPC localization. In terms of biological role, serine/threonine-protein kinase component of the chromosomal passenger complex (CPC), a complex that acts as a key regulator of mitosis. The CPC complex has essential functions at the centromere in ensuring correct chromosome alignment and segregation and is required for chromatin-induced microtubule stabilization and spindle assembly. Involved in the bipolar attachment of spindle microtubules to kinetochores and is a key regulator for the onset of cytokinesis during mitosis. Required for central/midzone spindle assembly and cleavage furrow formation. Key component of the cytokinesis checkpoint, a process required to delay abscission to prevent both premature resolution of intercellular chromosome bridges and accumulation of DNA damage: phosphorylates CHMP4C, leading to retain abscission-competent VPS4 (VPS4A and/or VPS4B) at the midbody ring until abscission checkpoint signaling is terminated at late cytokinesis. AURKB phosphorylates the CPC complex subunits BIRC5/survivin, CDCA8/borealin and INCENP. Phosphorylation of INCENP leads to increased AURKB activity. Other known AURKB substrates involved in centromeric functions and mitosis are CENPA, DES/desmin, GPAF, KIF2C, NSUN2, RACGAP1, SEPTIN1, VIM/vimentin, HASPIN, and histone H3. A positive feedback loop involving HASPIN and AURKB contributes to localization of CPC to centromeres. Phosphorylation of VIM controls vimentin filament segregation in cytokinetic process, whereas histone H3 is phosphorylated at 'Ser-10' and 'Ser-28' during mitosis (H3S10ph and H3S28ph, respectively). AURKB is also required for kinetochore localization of BUB1 and SGO1. Phosphorylation of p53/TP53 negatively regulates its transcriptional activity. Key regulator of active promoters in resting B- and T-lymphocytes: acts by mediating phosphorylation of H3S28ph at active promoters in resting B-cells, inhibiting RNF2/RING1B-mediated ubiquitination of histone H2A and enhancing binding and activity of the USP16 deubiquitinase at transcribed genes. Acts as an inhibitor of CGAS during mitosis: catalyzes phosphorylation of the N-terminus of CGAS during the G2-M transition, blocking CGAS liquid phase separation and activation, and thereby preventing CGAS-induced autoimmunity. Phosphorylates KRT5 during anaphase and telophase. Phosphorylates ATXN10 which promotes phosphorylation of ATXN10 by PLK1 and may play a role in the regulation of cytokinesis and stimulating the proteasomal degradation of ATXN10. The chain is Aurora kinase B (Aurkb) from Mus musculus (Mouse).